The sequence spans 386 residues: DNA methyltransferase CcrM (386 aa).

The 103-residue stretch at 280 to 382 folds into the RAMA domain; sequence LGKAELTVMT…LRKIIREQMA (103 aa).

Belongs to the N(4)/N(6)-methyltransferase family.

The catalysed reaction is a 2'-deoxyadenosine in DNA + S-adenosyl-L-methionine = an N(6)-methyl-2'-deoxyadenosine in DNA + S-adenosyl-L-homocysteine + H(+). In terms of biological role, a beta subtype methylase that recognizes the double-stranded sequence 5'-GANTC-3' and methylates A-2 on both strands. CcrM-mediated methylation has important cellular functions. Contributes to the accurate cell-cycle control of DNA replication and cellular morphology. This chain is DNA methyltransferase CcrM (ccrM), found in Brucella ovis (strain ATCC 25840 / 63/290 / NCTC 10512).